The chain runs to 768 residues: Putative calcium up-regulated protein H (768 aa).

Positions 1–22 are disordered; sequence MINIEDISKSSNQSEEKQLKST. Ricin B-type lectin domains are found at residues 25 to 145 and 116 to 248; these read KPKY…WTTF and QGNG…WGIN.

The protein belongs to the cup family.

Its subcellular location is the cytoplasm. The protein localises to the membrane. Functionally, may play an important role in stabilizing and/or regulating the cell membrane during Ca(2+) stress or certain stages of development. This chain is Putative calcium up-regulated protein H (cupH), found in Dictyostelium discoideum (Social amoeba).